Here is a 201-residue protein sequence, read N- to C-terminus: MDIKACYQNAKALLEGHFLLSSGFHSNYYLQSAKVLEDPKLAEQLALELAKQIQEAHLNIECVCSPAIGGILAGYELARALGVRFIFTERVDNTMALRRGFEVKKNEKILVCEDIITTGKSAMECAKVLEEKGAQIVAFGALANRGICKRAHSHLKAQEGACLPSHLPLFALEDFVFDMHKPSSCPLCATSVAIKPGSRGN.

A 5-phospho-alpha-D-ribose 1-diphosphate-binding site is contributed by 113 to 121 (EDIITTGKS). Orotate-binding residues include threonine 117 and arginine 145.

The protein belongs to the purine/pyrimidine phosphoribosyltransferase family. PyrE subfamily. As to quaternary structure, homodimer. Mg(2+) serves as cofactor.

The catalysed reaction is orotidine 5'-phosphate + diphosphate = orotate + 5-phospho-alpha-D-ribose 1-diphosphate. Its pathway is pyrimidine metabolism; UMP biosynthesis via de novo pathway; UMP from orotate: step 1/2. Its function is as follows. Catalyzes the transfer of a ribosyl phosphate group from 5-phosphoribose 1-diphosphate to orotate, leading to the formation of orotidine monophosphate (OMP). This chain is Orotate phosphoribosyltransferase, found in Helicobacter pylori (strain ATCC 700392 / 26695) (Campylobacter pylori).